Consider the following 353-residue polypeptide: Interferon-stimulated 20 kDa exonuclease-like 2 (353 aa).

Disordered regions lie at residues 1–93 (MSTL…QPLD) and 125–172 (ALPK…SGAS). The span at 14 to 23 (PPKKALEGNA) shows a compositional bias: basic and acidic residues. Over residues 24 to 35 (KHRNFVKKRRLL) the composition is skewed to basic residues. Basic and acidic residues predominate over residues 54–63 (LHSEPSKKGE). Residues 135–151 (RSQKKSSQKKSSKKNHP) are compositionally biased toward basic residues. Residues 152-172 (QKNAPQNSTQAHSENKCSGAS) show a composition bias toward polar residues. An Exonuclease domain is found at 178-353 (KMVAIDCEMV…EHLARNPPTD (176 aa)).

It is found in the nucleus. Its subcellular location is the nucleolus. Functionally, 3'-&gt; 5'-exoribonuclease involved in ribosome biogenesis in the processing of the 12S pre-rRNA. Displays a strong specificity for a 3'-end containing a free hydroxyl group. This chain is Interferon-stimulated 20 kDa exonuclease-like 2 (ISG20L2), found in Homo sapiens (Human).